The sequence spans 114 residues: NADH-ubiquinone oxidoreductase chain 3 (114 aa).

3 helical membrane passes run 3-23 (LITL…INTY), 52-72 (IQFF…VLLL), and 86-106 (TILL…YEWL).

The protein belongs to the complex I subunit 3 family.

It localises to the mitochondrion membrane. It catalyses the reaction a ubiquinone + NADH + 5 H(+)(in) = a ubiquinol + NAD(+) + 4 H(+)(out). Functionally, core subunit of the mitochondrial membrane respiratory chain NADH dehydrogenase (Complex I) that is believed to belong to the minimal assembly required for catalysis. Complex I functions in the transfer of electrons from NADH to the respiratory chain. The immediate electron acceptor for the enzyme is believed to be ubiquinone. The protein is NADH-ubiquinone oxidoreductase chain 3 (MT-ND3) of Lycodon semicarinatus (Ryukyu odd-tooth snake).